The sequence spans 356 residues: MTPLNNDRFLRALLRQPVDVTPVWMMRQAGRYLPEYRATRARAGDFMGLCTNPELACEVTLQPLERYPLDAAILFSDILTIPDAMGLGLYFETGEGPKFHKAVRTEADVNALKVINPEQDLPYVVNAVKTIRRELNGRVPLIGFSGSPWTLATYMIEGGSSRDFRRAKEMLYNQPEVMHRLLDVLAESVIVYLNAQIRAGAQAVQIFDTWGGALSHNAYREFSLKYMEKIVAGLIGEHEGRQVPVILFTKGGGQWLDAMADTGATALGLDWTTDIAAARARVGNRVALQGNMDPGILYASPERIRAEVGNILAAYGQGSGHIFNLGHGITPEVDPEHAGAFIRAVHDLSAQYHTAG.

Residues arginine 27 to arginine 31, aspartate 77, tyrosine 154, threonine 209, and histidine 327 each bind substrate.

The protein belongs to the uroporphyrinogen decarboxylase family. Homodimer.

The protein localises to the cytoplasm. It carries out the reaction uroporphyrinogen III + 4 H(+) = coproporphyrinogen III + 4 CO2. The protein operates within porphyrin-containing compound metabolism; protoporphyrin-IX biosynthesis; coproporphyrinogen-III from 5-aminolevulinate: step 4/4. In terms of biological role, catalyzes the decarboxylation of four acetate groups of uroporphyrinogen-III to yield coproporphyrinogen-III. This is Uroporphyrinogen decarboxylase from Cellvibrio japonicus (strain Ueda107) (Pseudomonas fluorescens subsp. cellulosa).